The primary structure comprises 264 residues: 14-3-3 protein homolog (264 aa).

Low complexity predominate over residues 236-258; that stretch reads SEAPAATEEQQQSSQAPAAQPTE. Positions 236-264 are disordered; that stretch reads SEAPAATEEQQQSSQAPAAQPTEGKADQE.

It belongs to the 14-3-3 family.

In Candida albicans (strain SC5314 / ATCC MYA-2876) (Yeast), this protein is 14-3-3 protein homolog (BMH1).